The primary structure comprises 202 residues: MATEAPPPVDTTEVPPFTAAETAVKQPHKLERKWTFWFDNQSKPKQGAAWGSSLKKAYTFDTVEEFWSLYDQIFKPSKLTVNADFHLFKAGIEPKWEDPECANGGKWTVTSSRKANLETMWLETLMALVGEQFDDSEDICGVVASVRRSQDKLSLWTKTATNEAAQMGIGRKWKEIIDTEKISYSFHDDSKRERSAKSRYTV.

The disordered stretch occupies residues 1–24 (MATEAPPPVDTTEVPPFTAAETAV). MRNA contacts are provided by residues 46 to 51 (QGAAWG), Lys78, and 96 to 97 (WE). Residues Cys101 and Cys140 are joined by a disulfide bond. MRNA is bound by residues 147–152 (RRSQDK) and 191–194 (KRER).

It belongs to the eukaryotic initiation factor 4E family. EIF4F is a multi-subunit complex, the composition of which varies with external and internal environmental conditions. It is composed of at least EIF4A, EIF4E and EIF4G. EIF4E is also known to interact with other partners. In higher plants two isoforms of EIF4F have been identified, named isoform EIF4F and isoform EIF(iso)4F. Isoform EIF4F has subunits p220 and p26, whereas isoform EIF(iso)4F has subunits p82 and p28. As to quaternary structure, (Microbial infection) Interacts with viral genome-linked protein (VPg); this interaction is possible in susceptible hosts but impaired in resistant plants. According to the redox status, the Cys-101-Cys-140 disulfide bridge may have a role in regulating protein function by affecting its ability to bind capped mRNA.

The protein resides in the cytoplasm. Its subcellular location is the nucleus. Its function is as follows. Component of the protein complex eIF4F, which is involved in the recognition of the mRNA cap, ATP-dependent unwinding of 5'-terminal secondary structure and recruitment of mRNA to the ribosome. Recognizes and binds the 7-methylguanosine-containing mRNA cap during an early step in the initiation of protein synthesis and facilitates ribosome binding by inducing the unwinding of the mRNAs secondary structures. Key component of recessive resistance to potyviruses. Functionally, (Microbial infection) Susceptibility host factor required for viral infection by recruiting viral RNAs to the host ribosomal complex via an interaction with viral genome-linked protein (VPg). The polypeptide is Eukaryotic translation initiation factor isoform 4E (Capsicum annuum (Capsicum pepper)).